An 809-amino-acid polypeptide reads, in one-letter code: Endoplasmin homolog (809 aa).

A signal peptide spans 1–18 (MRKWALSCALLLVLLLTT). Residues N111, D155, N168, and F200 each coordinate ATP. Residue N111 is glycosylated (N-linked (GlcNAc...) asparagine). Over residues 293 to 320 (VPADEEESNEEEESTTETTEEEETEDDE) the composition is skewed to acidic residues. Positions 293-329 (VPADEEESNEEEESTTETTEEEETEDDEEKKPKTKTV) are disordered. N-linked (GlcNAc...) asparagine glycosylation is found at N410, N450, and N617. Residues 766–809 (SLDLSPDAAVEEEEEVEEPEVEEKESAKQEAEEPEHEQYDKDEL) are disordered. Residues 774–788 (AVEEEEEVEEPEVEE) are compositionally biased toward acidic residues. The span at 789–809 (KESAKQEAEEPEHEQYDKDEL) shows a compositional bias: basic and acidic residues. The Prevents secretion from ER motif lies at 806–809 (KDEL).

It belongs to the heat shock protein 90 family.

The protein localises to the endoplasmic reticulum lumen. In terms of biological role, may have a molecular chaperone role in the processing of secreted materials. In Hordeum vulgare (Barley), this protein is Endoplasmin homolog.